The sequence spans 98 residues: Large ribosomal subunit protein uL23 (98 aa).

The protein belongs to the universal ribosomal protein uL23 family. In terms of assembly, part of the 50S ribosomal subunit. Contacts protein L29, and trigger factor when it is bound to the ribosome.

Its function is as follows. One of the early assembly proteins it binds 23S rRNA. One of the proteins that surrounds the polypeptide exit tunnel on the outside of the ribosome. Forms the main docking site for trigger factor binding to the ribosome. The chain is Large ribosomal subunit protein uL23 from Teredinibacter turnerae (strain ATCC 39867 / T7901).